A 315-amino-acid polypeptide reads, in one-letter code: Type II restriction enzyme SalI (315 aa).

The catalysed reaction is Endonucleolytic cleavage of DNA to give specific double-stranded fragments with terminal 5'-phosphates.. A P subtype restriction enzyme that recognizes the double-stranded sequence 5'-GTCGAC-3' and cleaves after G-1. The polypeptide is Type II restriction enzyme SalI (Streptomyces albus G).